Consider the following 505-residue polypeptide: Histidine ammonia-lyase (505 aa).

A cross-link (5-imidazolinone (Ala-Gly)) is located at residues 141–143; the sequence is ASG. At Ser142 the chain carries 2,3-didehydroalanine (Ser).

This sequence belongs to the PAL/histidase family. In terms of processing, contains an active site 4-methylidene-imidazol-5-one (MIO), which is formed autocatalytically by cyclization and dehydration of residues Ala-Ser-Gly.

Its subcellular location is the cytoplasm. The catalysed reaction is L-histidine = trans-urocanate + NH4(+). The protein operates within amino-acid degradation; L-histidine degradation into L-glutamate; N-formimidoyl-L-glutamate from L-histidine: step 1/3. The polypeptide is Histidine ammonia-lyase (Bacillus cereus (strain ZK / E33L)).